A 106-amino-acid polypeptide reads, in one-letter code: Photosystem II 5 kDa protein, chloroplastic (106 aa).

Residues 1 to 76 (MASITMMSSF…ACSVAKTAMA (76 aa)) constitute a chloroplast transit peptide. An intrachain disulfide couples cysteine 95 to cysteine 104.

Disulfide bond. In terms of tissue distribution, expressed in midvein, lamina and periphery of leaves (at protein level).

The protein resides in the plastid. It is found in the chloroplast thylakoid membrane. In terms of biological role, may be a component of the oxygen-evolving complex. In Petunia hybrida (Petunia), this protein is Photosystem II 5 kDa protein, chloroplastic.